A 245-amino-acid polypeptide reads, in one-letter code: Transmembrane and ubiquitin-like domain-containing protein 1 (245 aa).

Residues 2-30 (ALIEGVGDEVTVLFSVLACLLVLALAWVS) form a required to release iHOPS from membranes region. A helical transmembrane segment spans residues 11–31 (VTVLFSVLACLLVLALAWVST). Residues 34 to 51 (TESTDPLPQSSGTTTPAQ) are compositionally biased toward polar residues. The segment at 34 to 100 (TESTDPLPQS…ASTPPDSPQE (67 aa)) is disordered. Phosphoserine occurs at positions 73, 97, and 126. Residues 102–175 (LLLRLKFLND…LHCHVSTRVG (74 aa)) enclose the Ubiquitin-like domain. 2 consecutive transmembrane segments (helical) span residues 194-214 (IGSL…YCQI) and 219-239 (FFPL…SLLA).

Interacts with EEF1A1, GRIA2, GRIP1. Interacts with CAMLG, TUBG1. Interacts with NPM1 and CDKN2A; TMUB1 can enhance interaction between NPM1 and CDKN2A and is proposed to bridge the proteins; proposed to be mediated by iHOPS. Interacts with ERLIN2 and AMFR; TMUB1 promotes the interaction of ERLIN2 with AMFR. Processed by regulated intramembrane proteolysis (RIP) in the N-terminus to release iHOPS from membranes.

The protein localises to the membrane. The protein resides in the postsynaptic cell membrane. It is found in the recycling endosome. Its subcellular location is the cytoplasm. It localises to the cytoskeleton. The protein localises to the microtubule organizing center. The protein resides in the centrosome. It is found in the nucleus. Its subcellular location is the nucleolus. Its function is as follows. Involved in sterol-regulated ubiquitination and degradation of HMG-CoA reductase HMGCR. Involved in positive regulation of AMPA-selective glutamate receptor GRIA2 recycling to the cell surface. Acts as a negative regulator of hepatocyte growth during regeneration. May contribute to the regulation of translation during cell-cycle progression. May contribute to the regulation of cell proliferation. May be involved in centrosome assembly. Modulates stabilization and nucleolar localization of tumor suppressor CDKN2A and enhances association between CDKN2A and NPM1. This Rattus norvegicus (Rat) protein is Transmembrane and ubiquitin-like domain-containing protein 1 (Tmub1).